A 460-amino-acid polypeptide reads, in one-letter code: Argininosuccinate lyase (460 aa).

This sequence belongs to the lyase 1 family. Argininosuccinate lyase subfamily.

Its subcellular location is the cytoplasm. The catalysed reaction is 2-(N(omega)-L-arginino)succinate = fumarate + L-arginine. It functions in the pathway amino-acid biosynthesis; L-arginine biosynthesis; L-arginine from L-ornithine and carbamoyl phosphate: step 3/3. The protein is Argininosuccinate lyase of Rhodopirellula baltica (strain DSM 10527 / NCIMB 13988 / SH1).